Consider the following 602-residue polypeptide: Aspartate--tRNA(Asp/Asn) ligase (602 aa).

Glu175 contacts L-aspartate. The tract at residues 199–202 is aspartate; that stretch reads QIFK. Arg221 provides a ligand contact to L-aspartate. Residues 221–223 and Gln230 contribute to the ATP site; that span reads RDE. His458 is an L-aspartate binding site. Glu492 lines the ATP pocket. L-aspartate is bound at residue Arg499. An ATP-binding site is contributed by 544–547; sequence GLDR.

Belongs to the class-II aminoacyl-tRNA synthetase family. Type 1 subfamily. As to quaternary structure, homodimer.

The protein resides in the cytoplasm. The catalysed reaction is tRNA(Asx) + L-aspartate + ATP = L-aspartyl-tRNA(Asx) + AMP + diphosphate. Functionally, aspartyl-tRNA synthetase with relaxed tRNA specificity since it is able to aspartylate not only its cognate tRNA(Asp) but also tRNA(Asn). Reaction proceeds in two steps: L-aspartate is first activated by ATP to form Asp-AMP and then transferred to the acceptor end of tRNA(Asp/Asn). In Cupriavidus pinatubonensis (strain JMP 134 / LMG 1197) (Cupriavidus necator (strain JMP 134)), this protein is Aspartate--tRNA(Asp/Asn) ligase.